Here is a 550-residue protein sequence, read N- to C-terminus: Coiled-coil domain-containing protein 102A (550 aa).

2 disordered regions span residues 1–69 (MSHG…DGDW) and 138–247 (GARR…ATEE). Residues Ser-12, Ser-26, and Ser-28 each carry the phosphoserine modification. Positions 37–61 (SLPPTPPSGTPSPGPPPALPLPPAP) are enriched in pro residues. A coiled-coil region spans residues 72 to 161 (REELRLRELE…ARGRELARLR (90 aa)). Basic and acidic residues-rich tracts occupy residues 138-159 (GARR…ELAR) and 169-188 (QTRD…DVGS). Coiled-coil stretches lie at residues 263-396 (QKVL…RRQT) and 427-518 (KLKK…NAPL). Disordered regions lie at residues 472–497 (DELD…QSEN) and 509–550 (LRRQ…IQVA). Acidic residues predominate over residues 530–550 (EEAEDGTSDLDEDEDLQIQVA). A Phosphoserine modification is found at Ser-537.

The sequence is that of Coiled-coil domain-containing protein 102A (CCDC102A) from Homo sapiens (Human).